The sequence spans 165 residues: Transcription elongation factor GreA (165 aa).

A coiled-coil region spans residues 55–78 (AAKEEQGKQELRVRQLTQLLENAK).

This sequence belongs to the GreA/GreB family.

Its function is as follows. Necessary for efficient RNA polymerase transcription elongation past template-encoded arresting sites. The arresting sites in DNA have the property of trapping a certain fraction of elongating RNA polymerases that pass through, resulting in locked ternary complexes. Cleavage of the nascent transcript by cleavage factors such as GreA or GreB allows the resumption of elongation from the new 3'terminus. GreA releases sequences of 2 to 3 nucleotides. This chain is Transcription elongation factor GreA, found in Streptomyces avermitilis (strain ATCC 31267 / DSM 46492 / JCM 5070 / NBRC 14893 / NCIMB 12804 / NRRL 8165 / MA-4680).